We begin with the raw amino-acid sequence, 161 residues long: Nucleotide-binding protein Shal_3198 (161 aa).

This sequence belongs to the YajQ family.

Nucleotide-binding protein. The chain is Nucleotide-binding protein Shal_3198 from Shewanella halifaxensis (strain HAW-EB4).